The primary structure comprises 947 residues: Leucine-rich repeat-containing protein 37B (947 aa).

An N-terminal signal peptide occupies residues 1–27; sequence MSWLRFWGPWPLLTWQLLSLLVKEAQP. At 28 to 905 the chain is on the extracellular side; sequence LVWVKDPLQL…EVPGDDYKNK (878 aa). Disordered stretches follow at residues 42-88, 226-257, 294-458, and 484-514; these read LGPP…ALPQ, YLSM…QVGL, EVEP…PEPT, and SLTE…EQKA. Positions 311-320 are enriched in polar residues; the sequence is SMESLAQTPL. Asn358 carries N-linked (GlcNAc...) asparagine glycosylation. 3 stretches are compositionally biased toward polar residues: residues 404-415, 436-445, and 495-507; these read GQAQHSHLTEAT, SPTTEETSAQ, and LESS…QSET. LRR repeat units lie at residues 556–577, 580–601, 604–625, 628–649, 655–676, and 679–699; these read IFTT…VWKA, WTEK…SFEG, YLQY…TFES, FLQY…TFQA, FLHN…YLFE, and ALKY…KNIL. N-linked (GlcNAc...) asparagine glycosylation is present at Asn789. Residues 867–897 adopt a coiled-coil conformation; the sequence is DTDQQKTNYINENMEQNEQKEQKSSELMKEV. The helical transmembrane segment at 906 to 926 threads the bilayer; it reads LIFAISVTVILIILIIIFCLI. Residues 927 to 947 lie on the Cytoplasmic side of the membrane; sequence EVNSHKRASEKYKDNPSISGA.

The protein localises to the membrane. This chain is Leucine-rich repeat-containing protein 37B (LRRC37B), found in Homo sapiens (Human).